Reading from the N-terminus, the 237-residue chain is 5'-methylthioadenosine/S-adenosylhomocysteine nucleosidase (237 aa).

The active-site Proton acceptor is Glu-12. Substrate-binding positions include Ala-78, Ile-152, and 173-174; that span reads ME. Residue Asp-197 is the Proton donor of the active site.

The protein belongs to the PNP/UDP phosphorylase family. MtnN subfamily. As to quaternary structure, homodimer.

It carries out the reaction S-adenosyl-L-homocysteine + H2O = S-(5-deoxy-D-ribos-5-yl)-L-homocysteine + adenine. The catalysed reaction is S-methyl-5'-thioadenosine + H2O = 5-(methylsulfanyl)-D-ribose + adenine. The enzyme catalyses 5'-deoxyadenosine + H2O = 5-deoxy-D-ribose + adenine. It participates in amino-acid biosynthesis; L-methionine biosynthesis via salvage pathway; S-methyl-5-thio-alpha-D-ribose 1-phosphate from S-methyl-5'-thioadenosine (hydrolase route): step 1/2. Catalyzes the irreversible cleavage of the glycosidic bond in both 5'-methylthioadenosine (MTA) and S-adenosylhomocysteine (SAH/AdoHcy) to adenine and the corresponding thioribose, 5'-methylthioribose and S-ribosylhomocysteine, respectively. Also cleaves 5'-deoxyadenosine, a toxic by-product of radical S-adenosylmethionine (SAM) enzymes, into 5-deoxyribose and adenine. Thus, is required for in vivo function of the radical SAM enzymes biotin synthase and lipoic acid synthase, that are inhibited by 5'-deoxyadenosine accumulation. This Hamiltonella defensa subsp. Acyrthosiphon pisum (strain 5AT) protein is 5'-methylthioadenosine/S-adenosylhomocysteine nucleosidase.